An 89-amino-acid chain; its full sequence is Double-stranded DNA-binding protein (89 aa).

Homodimer.

May play a role in transcription of several T4 genes. Binds double-stranded DNA and interacts preferentially with T4 late promoter regions. The sequence is that of Double-stranded DNA-binding protein (dsbA) from Enterobacteria phage T4 (Bacteriophage T4).